Consider the following 887-residue polypeptide: Alanine--tRNA ligase (887 aa).

His563, His567, Cys677, and His681 together coordinate Zn(2+).

This sequence belongs to the class-II aminoacyl-tRNA synthetase family. Zn(2+) is required as a cofactor.

The protein localises to the cytoplasm. The enzyme catalyses tRNA(Ala) + L-alanine + ATP = L-alanyl-tRNA(Ala) + AMP + diphosphate. In terms of biological role, catalyzes the attachment of alanine to tRNA(Ala) in a two-step reaction: alanine is first activated by ATP to form Ala-AMP and then transferred to the acceptor end of tRNA(Ala). Also edits incorrectly charged Ser-tRNA(Ala) and Gly-tRNA(Ala) via its editing domain. This chain is Alanine--tRNA ligase, found in Dinoroseobacter shibae (strain DSM 16493 / NCIMB 14021 / DFL 12).